Consider the following 154-residue polypeptide: MSIAENKKAFFNYHIEERFEAGIVLAGWEIKSIRSGQIQLTDGYVVIKDGELFLIGLRINALRSASTHVNPEPDRTKKLLMHKAEIRRLIGKVEQKGHTLVPLNLHYKGGRVKVDVALAKGKAEHDKRHTIKDRDWQREQGRLMRHKVSAPHKD.

A compositionally biased stretch (basic and acidic residues) spans 123 to 142 (AEHDKRHTIKDRDWQREQGR). The interval 123-154 (AEHDKRHTIKDRDWQREQGRLMRHKVSAPHKD) is disordered. The span at 143 to 154 (LMRHKVSAPHKD) shows a compositional bias: basic residues.

It belongs to the SmpB family.

Its subcellular location is the cytoplasm. Functionally, required for rescue of stalled ribosomes mediated by trans-translation. Binds to transfer-messenger RNA (tmRNA), required for stable association of tmRNA with ribosomes. tmRNA and SmpB together mimic tRNA shape, replacing the anticodon stem-loop with SmpB. tmRNA is encoded by the ssrA gene; the 2 termini fold to resemble tRNA(Ala) and it encodes a 'tag peptide', a short internal open reading frame. During trans-translation Ala-aminoacylated tmRNA acts like a tRNA, entering the A-site of stalled ribosomes, displacing the stalled mRNA. The ribosome then switches to translate the ORF on the tmRNA; the nascent peptide is terminated with the 'tag peptide' encoded by the tmRNA and targeted for degradation. The ribosome is freed to recommence translation, which seems to be the essential function of trans-translation. In Leptothrix cholodnii (strain ATCC 51168 / LMG 8142 / SP-6) (Leptothrix discophora (strain SP-6)), this protein is SsrA-binding protein.